The primary structure comprises 252 residues: Phosphate import ATP-binding protein PstB 1 (252 aa).

Positions 6-247 (LQVSDLSVYY…PQHKETEDYI (242 aa)) constitute an ABC transporter domain. 38–45 (GPSGSGKS) serves as a coordination point for ATP.

This sequence belongs to the ABC transporter superfamily. Phosphate importer (TC 3.A.1.7) family. The complex is composed of two ATP-binding proteins (PstB), two transmembrane proteins (PstC and PstA) and a solute-binding protein (PstS).

The protein localises to the cell membrane. It carries out the reaction phosphate(out) + ATP + H2O = ADP + 2 phosphate(in) + H(+). Part of the ABC transporter complex PstSACB involved in phosphate import. Responsible for energy coupling to the transport system. The chain is Phosphate import ATP-binding protein PstB 1 from Streptococcus pneumoniae (strain ATCC BAA-255 / R6).